Here is a 129-residue protein sequence, read N- to C-terminus: Phenazine antibiotic resistance protein EhpR (129 aa).

The region spanning 10–128 is the VOC domain; it reads TPNLQLVYVS…DGHIIRVCPL (119 aa). D-alanylgriseoluteate contacts are provided by residues 42 to 43 and tryptophan 57; that span reads RY.

In terms of assembly, homodimer.

Required for resistance to the phenazine antibiotic D-alanylgriseoluteic acid (AGA), an antibiotic produced by E.agglomerans itself, and thus protects the bacterium against phenazine toxicity. Probably binds AGA and acts as a chaperone that works in tandem with a membrane transporter for subsequent antibiotic secretion. This Enterobacter agglomerans (Erwinia herbicola) protein is Phenazine antibiotic resistance protein EhpR.